Consider the following 505-residue polypeptide: Cobyric acid synthase (505 aa).

Positions 260-453 constitute a GATase cobBQ-type domain; sequence RIAVAAIYFP…FHGIIDEPEV (194 aa). Cys-341 (nucleophile) is an active-site residue. The active site involves His-445.

The protein belongs to the CobB/CobQ family. CobQ subfamily.

The protein operates within cofactor biosynthesis; adenosylcobalamin biosynthesis. Its function is as follows. Catalyzes amidations at positions B, D, E, and G on adenosylcobyrinic A,C-diamide. NH(2) groups are provided by glutamine, and one molecule of ATP is hydrogenolyzed for each amidation. The sequence is that of Cobyric acid synthase from Chlorobium phaeobacteroides (strain DSM 266 / SMG 266 / 2430).